The sequence spans 275 residues: Multi-heme protein MamP (275 aa).

The Cytoplasmic portion of the chain corresponds to 1 to 6; the sequence is MNSKVA. A membrane pass occupies residues 7-20; that stretch reads LLVVGLAVVLALVI. Residues 21-275 lie on the Lumenal side of the membrane; sequence GRQGPVAPQA…GPCEACHVIK (255 aa). The segment at 89–206 is PDZ; sequence KLKVFEGHWQ…GGLGFAQLEG (118 aa). The MCR (magnetochrome) 1 motif lies at 210-230; sequence ILAGDPRPHGYRGACTDCHPI. The heme site is built by C224, C227, H228, C268, C271, and H272. The MCR 2 motif lies at 250–274; the sequence is ITRDMVARSVNPHEVRGPCEACHVI.

It belongs to the magnetosome MamP family. In terms of assembly, homodimer. Requires heme as cofactor. Post-translationally, subject to proteolytic cleavage which requires both MamE and MamO.

Its subcellular location is the cell inner membrane. Involved in redox-control of magnetite formation; oxidizes Fe(2+) to Fe(3+) or to mixed-valent Fe(2+)-Fe(3+) oxide minerals. May control magnetite crystal size and number. Overproduction of MamP leads to more crystals than normal during exponential growth of normal size; in stationary phase crystal numbers become wild-type. The chain is Multi-heme protein MamP (mamP) from Paramagnetospirillum magneticum (strain ATCC 700264 / AMB-1) (Magnetospirillum magneticum).